A 673-amino-acid polypeptide reads, in one-letter code: UvrABC system protein B (673 aa).

The region spanning 25 to 413 (EGIESGLAHQ…GSDIAEQVVR (389 aa)) is the Helicase ATP-binding domain. 38–45 (GVTGSGKT) is a binding site for ATP. The short motif at 91 to 114 (YYDYYQPEAYVPTTDTFIEKDASV) is the Beta-hairpin element. The 154-residue stretch at 430 to 583 (QVDDLLSEIN…QHQYNLDNNI (154 aa)) folds into the Helicase C-terminal domain. A UVR domain is found at 634–669 (DTKIVELEKLMQGHAQNLEFEQAAAMRDKIAKLRIQ).

This sequence belongs to the UvrB family. In terms of assembly, forms a heterotetramer with UvrA during the search for lesions. Interacts with UvrC in an incision complex.

Its subcellular location is the cytoplasm. In terms of biological role, the UvrABC repair system catalyzes the recognition and processing of DNA lesions. A damage recognition complex composed of 2 UvrA and 2 UvrB subunits scans DNA for abnormalities. Upon binding of the UvrA(2)B(2) complex to a putative damaged site, the DNA wraps around one UvrB monomer. DNA wrap is dependent on ATP binding by UvrB and probably causes local melting of the DNA helix, facilitating insertion of UvrB beta-hairpin between the DNA strands. Then UvrB probes one DNA strand for the presence of a lesion. If a lesion is found the UvrA subunits dissociate and the UvrB-DNA preincision complex is formed. This complex is subsequently bound by UvrC and the second UvrB is released. If no lesion is found, the DNA wraps around the other UvrB subunit that will check the other stand for damage. The polypeptide is UvrABC system protein B (Colwellia psychrerythraea (strain 34H / ATCC BAA-681) (Vibrio psychroerythus)).